Here is a 495-residue protein sequence, read N- to C-terminus: Leucine aminopeptidase 2 (495 aa).

The first 21 residues, 1–21 (MKTQLLSLGVALTAISQGVIA), serve as a signal peptide directing secretion. The region spanning 124-218 (PPADKITAEL…ADGKNLASLV (95 aa)) is the PA domain. N-linked (GlcNAc...) asparagine glycans are attached at residues Asn-142 and Asn-235. Zn(2+)-binding residues include His-259 and Asp-271. A glycan (N-linked (GlcNAc...) asparagine) is linked at Asn-272. Glu-303 acts as the Proton acceptor in catalysis. Zn(2+)-binding residues include Glu-304 and Asp-332. A glycan (N-linked (GlcNAc...) asparagine) is linked at Asn-352. His-430 lines the Zn(2+) pocket. The segment at 464 to 495 (GFPTRPKTGKRDVSPRGQSMPGGGCGHHSVFM) is disordered.

The protein belongs to the peptidase M28 family. M28A subfamily. In terms of assembly, monomer. Requires Zn(2+) as cofactor.

Its subcellular location is the secreted. Extracellular aminopeptidase that releases a wide variety of amino acids from natural peptides and contributes to pathogenicity. The polypeptide is Leucine aminopeptidase 2 (LAP2) (Arthroderma otae (strain ATCC MYA-4605 / CBS 113480) (Microsporum canis)).